Reading from the N-terminus, the 60-residue chain is Cytochrome c oxidase assembly protein COX14 homolog (60 aa).

A helical transmembrane segment spans residues 10–32 (VGYRLFSGSMMLLTVYGGYLCVV).

Its subcellular location is the mitochondrion membrane. In terms of biological role, plays a role in the assembly or stability of the cytochrome c oxidase complex (COX). The protein is Cytochrome c oxidase assembly protein COX14 homolog of Danio rerio (Zebrafish).